The following is a 144-amino-acid chain: Large ribosomal subunit protein uL15 (144 aa).

The interval 1 to 51 (MELNSIKPGSGSKHAKRRVGRGIGSGLGKTAGRGHKGQKSRAGGYHKVGFE) is disordered. Positions 21–31 (RGIGSGLGKTA) are enriched in gly residues.

It belongs to the universal ribosomal protein uL15 family. As to quaternary structure, part of the 50S ribosomal subunit.

Its function is as follows. Binds to the 23S rRNA. This is Large ribosomal subunit protein uL15 from Leptothrix cholodnii (strain ATCC 51168 / LMG 8142 / SP-6) (Leptothrix discophora (strain SP-6)).